The following is a 615-amino-acid chain: Putative lipase ATG15 (615 aa).

At 1-22 (MKQLGEEHPLISTKRPRAKKRR) the chain is on the cytoplasmic side. The chain crosses the membrane as a helical; Signal-anchor for type II membrane protein span at residues 23-43 (SIAICAAVLTLIAFGFIRFVP). Residues 44-615 (KDILAGGWYE…NSAAHHVSSI (572 aa)) lie on the Lumenal side of the membrane. 3 N-linked (GlcNAc...) asparagine glycosylation sites follow: asparagine 253, asparagine 276, and asparagine 360. Serine 378 (charge relay system) is an active-site residue. A disordered region spans residues 520–559 (NKNDEPPLPNPLHPKPPSTVRSSNMPHEQSPNASRSLSSL). Positions 525 to 536 (PPLPNPLHPKPP) are enriched in pro residues. A compositionally biased stretch (polar residues) spans 538–559 (TVRSSNMPHEQSPNASRSLSSL). Asparagine 551 carries an N-linked (GlcNAc...) asparagine glycan.

This sequence belongs to the AB hydrolase superfamily. Lipase family. As to quaternary structure, binds to both phosphatidylinositol (PI) and phosphatidylinositol 3,5-bisphosphate (PIP2).

It localises to the endosome. It is found in the multivesicular body membrane. Its subcellular location is the prevacuolar compartment membrane. The enzyme catalyses a triacylglycerol + H2O = a diacylglycerol + a fatty acid + H(+). Functionally, lipase which is essential for lysis of subvacuolar cytoplasm to vacuole targeted bodies and intravacuolar autophagic bodies. Involved in the lysis of intravacuolar multivesicular body (MVB) vesicles. The intravacuolar membrane disintegration by ATG15 is critical to life span extension. The protein is Putative lipase ATG15 (ATG15) of Debaryomyces hansenii (strain ATCC 36239 / CBS 767 / BCRC 21394 / JCM 1990 / NBRC 0083 / IGC 2968) (Yeast).